A 404-amino-acid chain; its full sequence is Glucose-1-phosphate adenylyltransferase 2 (404 aa).

Residues Tyr97, Gly162, 177 to 178, and Ser195 contribute to the alpha-D-glucose 1-phosphate site; that span reads EK.

It belongs to the bacterial/plant glucose-1-phosphate adenylyltransferase family. Homotetramer.

The catalysed reaction is alpha-D-glucose 1-phosphate + ATP + H(+) = ADP-alpha-D-glucose + diphosphate. The protein operates within glycan biosynthesis; glycogen biosynthesis. Involved in the biosynthesis of ADP-glucose, a building block required for the elongation reactions to produce glycogen. Catalyzes the reaction between ATP and alpha-D-glucose 1-phosphate (G1P) to produce pyrophosphate and ADP-Glc. This Vibrio parahaemolyticus serotype O3:K6 (strain RIMD 2210633) protein is Glucose-1-phosphate adenylyltransferase 2.